The chain runs to 344 residues: Phosphoribosylformylglycinamidine cyclo-ligase (344 aa).

It belongs to the AIR synthase family.

The protein localises to the cytoplasm. The enzyme catalyses 2-formamido-N(1)-(5-O-phospho-beta-D-ribosyl)acetamidine + ATP = 5-amino-1-(5-phospho-beta-D-ribosyl)imidazole + ADP + phosphate + H(+). It participates in purine metabolism; IMP biosynthesis via de novo pathway; 5-amino-1-(5-phospho-D-ribosyl)imidazole from N(2)-formyl-N(1)-(5-phospho-D-ribosyl)glycinamide: step 2/2. In Neisseria meningitidis serogroup C / serotype 2a (strain ATCC 700532 / DSM 15464 / FAM18), this protein is Phosphoribosylformylglycinamidine cyclo-ligase.